A 248-amino-acid polypeptide reads, in one-letter code: Phosphatidylglycerol--prolipoprotein diacylglyceryl transferase (248 aa).

Helical transmembrane passes span phenylalanine 6–leucine 26, asparagine 47–phenylalanine 67, and glycine 84–threonine 104. A 1,2-diacyl-sn-glycero-3-phospho-(1'-sn-glycerol) is bound at residue arginine 130. 2 helical membrane passes run glycine 186 to leucine 206 and methionine 218 to serine 238.

It belongs to the Lgt family.

The protein resides in the cell membrane. It carries out the reaction L-cysteinyl-[prolipoprotein] + a 1,2-diacyl-sn-glycero-3-phospho-(1'-sn-glycerol) = an S-1,2-diacyl-sn-glyceryl-L-cysteinyl-[prolipoprotein] + sn-glycerol 1-phosphate + H(+). It participates in protein modification; lipoprotein biosynthesis (diacylglyceryl transfer). Its function is as follows. Catalyzes the transfer of the diacylglyceryl group from phosphatidylglycerol to the sulfhydryl group of the N-terminal cysteine of a prolipoprotein, the first step in the formation of mature lipoproteins. This Clostridioides difficile (strain 630) (Peptoclostridium difficile) protein is Phosphatidylglycerol--prolipoprotein diacylglyceryl transferase.